Consider the following 325-residue polypeptide: Holliday junction branch migration complex subunit RuvB (325 aa).

The interval 1–172 is large ATPase domain (RuvB-L); it reads MENNELLDIT…FGVVFRLEFY (172 aa). ATP-binding positions include Leu11, Arg12, Gly53, Lys56, Thr57, Thr58, 119-121, Arg162, Tyr172, and Arg209; that span reads EDF. Thr57 is a Mg(2+) binding site. The interval 173 to 243 is small ATPAse domain (RuvB-S); the sequence is NSEELKEIVK…IAQEALIAMD (71 aa). Residues 246-325 form a head domain (RuvB-H) region; sequence DYGLDDMDRK…LKRKIPERLF (80 aa). DNA is bound by residues Arg301 and Arg306.

The protein belongs to the RuvB family. As to quaternary structure, homohexamer. Forms an RuvA(8)-RuvB(12)-Holliday junction (HJ) complex. HJ DNA is sandwiched between 2 RuvA tetramers; dsDNA enters through RuvA and exits via RuvB. An RuvB hexamer assembles on each DNA strand where it exits the tetramer. Each RuvB hexamer is contacted by two RuvA subunits (via domain III) on 2 adjacent RuvB subunits; this complex drives branch migration. In the full resolvosome a probable DNA-RuvA(4)-RuvB(12)-RuvC(2) complex forms which resolves the HJ.

It localises to the cytoplasm. The catalysed reaction is ATP + H2O = ADP + phosphate + H(+). Functionally, the RuvA-RuvB-RuvC complex processes Holliday junction (HJ) DNA during genetic recombination and DNA repair, while the RuvA-RuvB complex plays an important role in the rescue of blocked DNA replication forks via replication fork reversal (RFR). RuvA specifically binds to HJ cruciform DNA, conferring on it an open structure. The RuvB hexamer acts as an ATP-dependent pump, pulling dsDNA into and through the RuvAB complex. RuvB forms 2 homohexamers on either side of HJ DNA bound by 1 or 2 RuvA tetramers; 4 subunits per hexamer contact DNA at a time. Coordinated motions by a converter formed by DNA-disengaged RuvB subunits stimulates ATP hydrolysis and nucleotide exchange. Immobilization of the converter enables RuvB to convert the ATP-contained energy into a lever motion, pulling 2 nucleotides of DNA out of the RuvA tetramer per ATP hydrolyzed, thus driving DNA branch migration. The RuvB motors rotate together with the DNA substrate, which together with the progressing nucleotide cycle form the mechanistic basis for DNA recombination by continuous HJ branch migration. Branch migration allows RuvC to scan DNA until it finds its consensus sequence, where it cleaves and resolves cruciform DNA. This is Holliday junction branch migration complex subunit RuvB from Thermodesulfovibrio yellowstonii (strain ATCC 51303 / DSM 11347 / YP87).